A 201-amino-acid chain; its full sequence is Proteasome subunit beta 1 (201 aa).

Position 1 (methionine 1) is a propeptide, removed in mature form; by autocatalysis. The active-site Nucleophile is threonine 2.

Belongs to the peptidase T1B family. In terms of assembly, the 20S proteasome core is composed of 14 alpha and 14 beta subunits that assemble into four stacked heptameric rings, resulting in a barrel-shaped structure. The two inner rings, each composed of seven catalytic beta subunits, are sandwiched by two outer rings, each composed of seven alpha subunits. The catalytic chamber with the active sites is on the inside of the barrel. Has a gated structure, the ends of the cylinder being occluded by the N-termini of the alpha-subunits. Is capped at one or both ends by the proteasome regulatory ATPase, PAN.

The protein localises to the cytoplasm. It catalyses the reaction Cleavage of peptide bonds with very broad specificity.. Its activity is regulated as follows. The formation of the proteasomal ATPase PAN-20S proteasome complex, via the docking of the C-termini of PAN into the intersubunit pockets in the alpha-rings, triggers opening of the gate for substrate entry. Interconversion between the open-gate and close-gate conformations leads to a dynamic regulation of the 20S proteasome proteolysis activity. In terms of biological role, component of the proteasome core, a large protease complex with broad specificity involved in protein degradation. This chain is Proteasome subunit beta 1, found in Pyrobaculum calidifontis (strain DSM 21063 / JCM 11548 / VA1).